The chain runs to 577 residues: 2-succinyl-5-enolpyruvyl-6-hydroxy-3-cyclohexene-1-carboxylate synthase (577 aa).

Belongs to the TPP enzyme family. MenD subfamily. Homodimer. The cofactor is Mg(2+). It depends on Mn(2+) as a cofactor. Requires thiamine diphosphate as cofactor.

The enzyme catalyses isochorismate + 2-oxoglutarate + H(+) = 5-enolpyruvoyl-6-hydroxy-2-succinyl-cyclohex-3-ene-1-carboxylate + CO2. It functions in the pathway quinol/quinone metabolism; 1,4-dihydroxy-2-naphthoate biosynthesis; 1,4-dihydroxy-2-naphthoate from chorismate: step 2/7. The protein operates within quinol/quinone metabolism; menaquinone biosynthesis. Catalyzes the thiamine diphosphate-dependent decarboxylation of 2-oxoglutarate and the subsequent addition of the resulting succinic semialdehyde-thiamine pyrophosphate anion to isochorismate to yield 2-succinyl-5-enolpyruvyl-6-hydroxy-3-cyclohexene-1-carboxylate (SEPHCHC). This is 2-succinyl-5-enolpyruvyl-6-hydroxy-3-cyclohexene-1-carboxylate synthase from Porphyromonas gingivalis (strain ATCC BAA-308 / W83).